We begin with the raw amino-acid sequence, 804 residues long: Putative mRNA-capping enzyme P5 (804 aa).

It belongs to the phytoreovirus protein P5 family.

It localises to the virion. Its subcellular location is the host cytoplasm. It catalyses the reaction a 5'-end diphospho-ribonucleoside in mRNA + GTP + H(+) = a 5'-end (5'-triphosphoguanosine)-ribonucleoside in mRNA + diphosphate. It functions in the pathway mRNA processing; mRNA capping. In terms of biological role, enzyme involved in mRNA capping (Potential). Binds to GTP and might have guanylyltransferase activity. Together with the RNA-directed RNA polymerase P1 and protein P7, forms an transcriptional complex positioned near the channels situated at each of the five-fold vertices of the core. The polypeptide is Putative mRNA-capping enzyme P5 (Catharanthus roseus (Madagascar periwinkle)).